Here is a 369-residue protein sequence, read N- to C-terminus: Cytochrome b561 and DOMON domain-containing protein At3g07570 (369 aa).

An N-terminal signal peptide occupies residues 1–22 (MKLYSVSIIIFVLIALSTIVNA). The region spanning 55–167 (QNFILRYART…PRQSLLYAVG (113 aa)) is the DOMON domain. One can recognise a Cytochrome b561 domain in the interval 174-369 (SSPDFRLREH…GLEVRKFLKK (196 aa)). A helical membrane pass occupies residues 212–232 (THGLMNMFGWGILIIVGAIVA). 2 residues coordinate heme b: His213 and His246. Transmembrane regions (helical) follow at residues 247-267 (IALQTTGFLLGLTGVICGLVL) and 279-299 (HKGLGITILVMGVLQMLALLA). Heme b-binding residues include His279 and His315. 2 helical membrane passes run 321-341 (LLIILAISNIFYGIHLAKAGT) and 343-363 (WNGGYGFAVAVLALTAIGLEV).

Heme b is required as a cofactor.

The protein localises to the membrane. May act as a catecholamine-responsive trans-membrane electron transporter. In Arabidopsis thaliana (Mouse-ear cress), this protein is Cytochrome b561 and DOMON domain-containing protein At3g07570.